Here is a 795-residue protein sequence, read N- to C-terminus: Phenylalanine--tRNA ligase beta subunit (795 aa).

One can recognise a tRNA-binding domain in the interval 39-148; that stretch reads AGEFNGVVVG…ADAPIGVDVR (110 aa). Residues 401 to 476 form the B5 domain; that stretch reads PKQATITLRR…RIYGYNNIPD (76 aa). 4 residues coordinate Mg(2+): aspartate 454, aspartate 460, glutamate 463, and glutamate 464. An FDX-ACB domain is found at 701 to 794; the sequence is SRFPANRRDI…LKQRFQASLR (94 aa).

This sequence belongs to the phenylalanyl-tRNA synthetase beta subunit family. Type 1 subfamily. As to quaternary structure, tetramer of two alpha and two beta subunits. Mg(2+) serves as cofactor.

It is found in the cytoplasm. It catalyses the reaction tRNA(Phe) + L-phenylalanine + ATP = L-phenylalanyl-tRNA(Phe) + AMP + diphosphate + H(+). The chain is Phenylalanine--tRNA ligase beta subunit from Yersinia pestis.